The chain runs to 143 residues: Anti-sigma F factor (143 aa).

The protein belongs to the anti-sigma-factor family.

The enzyme catalyses L-seryl-[protein] + ATP = O-phospho-L-seryl-[protein] + ADP + H(+). It catalyses the reaction L-threonyl-[protein] + ATP = O-phospho-L-threonyl-[protein] + ADP + H(+). Functionally, binds to sigma F and blocks its ability to form an RNA polymerase holoenzyme (E-sigma F). Phosphorylates SpoIIAA on a serine residue. This phosphorylation may enable SpoIIAA to act as an anti-anti-sigma factor that counteracts SpoIIAB and thus releases sigma F from inhibition. The protein is Anti-sigma F factor of Clostridium beijerinckii (strain ATCC 51743 / NCIMB 8052) (Clostridium acetobutylicum).